The primary structure comprises 651 residues: Kinesin-like protein KIF22-A (651 aa).

One can recognise a Kinesin motor domain in the interval Arg-31–Ile-359. Position 116 to 123 (Gly-116 to Thr-123) interacts with ATP. The disordered stretch occupies residues Gln-366 to Gly-413. Residues Thr-401–Asp-410 are compositionally biased toward polar residues. Positions Lys-452–Leu-498 form a coiled coil. Positions Gly-561–Asn-564 match the Important for regulated proteolytic degradation motif.

Belongs to the TRAFAC class myosin-kinesin ATPase superfamily. Kinesin family. In terms of processing, ubiquitinated, leading to its subsequent proteasomal degradation.

It localises to the nucleus. Its subcellular location is the cytoplasm. It is found in the cytoskeleton. Kinesin family member that is involved in spindle formation and the movements of chromosomes during mitosis and meiosis. Binds to microtubules and to DNA. The sequence is that of Kinesin-like protein KIF22-A (kif22-a) from Xenopus laevis (African clawed frog).